The sequence spans 204 residues: Holliday junction branch migration complex subunit RuvA (204 aa).

Residues 1–64 (MIGKLKGTID…EDQLKLFGFM (64 aa)) form a domain I region. The tract at residues 65-143 (TALEREWFNL…AFAGEAINIA (79 aa)) is domain II. The interval 144 to 151 (LKQELGEG) is flexible linker. A domain III region spans residues 152–204 (VAAAPVADAVSALTNLGYSRDQAANAVAAAMKTAGDGADSAKLIRLGLKELAR).

The protein belongs to the RuvA family. In terms of assembly, homotetramer. Forms an RuvA(8)-RuvB(12)-Holliday junction (HJ) complex. HJ DNA is sandwiched between 2 RuvA tetramers; dsDNA enters through RuvA and exits via RuvB. An RuvB hexamer assembles on each DNA strand where it exits the tetramer. Each RuvB hexamer is contacted by two RuvA subunits (via domain III) on 2 adjacent RuvB subunits; this complex drives branch migration. In the full resolvosome a probable DNA-RuvA(4)-RuvB(12)-RuvC(2) complex forms which resolves the HJ.

The protein localises to the cytoplasm. Functionally, the RuvA-RuvB-RuvC complex processes Holliday junction (HJ) DNA during genetic recombination and DNA repair, while the RuvA-RuvB complex plays an important role in the rescue of blocked DNA replication forks via replication fork reversal (RFR). RuvA specifically binds to HJ cruciform DNA, conferring on it an open structure. The RuvB hexamer acts as an ATP-dependent pump, pulling dsDNA into and through the RuvAB complex. HJ branch migration allows RuvC to scan DNA until it finds its consensus sequence, where it cleaves and resolves the cruciform DNA. The chain is Holliday junction branch migration complex subunit RuvA from Rhizobium etli (strain CIAT 652).